The sequence spans 396 residues: Anhydro-N-acetylmuramic acid kinase (396 aa).

An ATP-binding site is contributed by 21–28; the sequence is GTSADGID.

The protein belongs to the anhydro-N-acetylmuramic acid kinase family.

The catalysed reaction is 1,6-anhydro-N-acetyl-beta-muramate + ATP + H2O = N-acetyl-D-muramate 6-phosphate + ADP + H(+). The protein operates within amino-sugar metabolism; 1,6-anhydro-N-acetylmuramate degradation. Its pathway is cell wall biogenesis; peptidoglycan recycling. In terms of biological role, catalyzes the specific phosphorylation of 1,6-anhydro-N-acetylmuramic acid (anhMurNAc) with the simultaneous cleavage of the 1,6-anhydro ring, generating MurNAc-6-P. Is required for the utilization of anhMurNAc either imported from the medium or derived from its own cell wall murein, and thus plays a role in cell wall recycling. In Caldanaerobacter subterraneus subsp. tengcongensis (strain DSM 15242 / JCM 11007 / NBRC 100824 / MB4) (Thermoanaerobacter tengcongensis), this protein is Anhydro-N-acetylmuramic acid kinase.